Consider the following 673-residue polypeptide: UvrABC system protein B (673 aa).

The Helicase ATP-binding domain maps to 26 to 183 (EGLEDGLAHQ…RRLAELQYTR (158 aa)). Position 39–46 (39–46 (GVTGSGKT)) interacts with ATP. The Beta-hairpin signature appears at 92–115 (YYDYYQPEAYVPSSDTFIEKDASV). The 167-residue stretch at 431 to 597 (QVDDLLSEIR…GLNKKVVDIL (167 aa)) folds into the Helicase C-terminal domain. Residues 633-668 (QQKIHELEGQMMQHAQNLEFEEAAQIRDQLHQLREL) form the UVR domain.

Belongs to the UvrB family. Forms a heterotetramer with UvrA during the search for lesions. Interacts with UvrC in an incision complex.

The protein resides in the cytoplasm. The UvrABC repair system catalyzes the recognition and processing of DNA lesions. A damage recognition complex composed of 2 UvrA and 2 UvrB subunits scans DNA for abnormalities. Upon binding of the UvrA(2)B(2) complex to a putative damaged site, the DNA wraps around one UvrB monomer. DNA wrap is dependent on ATP binding by UvrB and probably causes local melting of the DNA helix, facilitating insertion of UvrB beta-hairpin between the DNA strands. Then UvrB probes one DNA strand for the presence of a lesion. If a lesion is found the UvrA subunits dissociate and the UvrB-DNA preincision complex is formed. This complex is subsequently bound by UvrC and the second UvrB is released. If no lesion is found, the DNA wraps around the other UvrB subunit that will check the other stand for damage. This Klebsiella pneumoniae subsp. pneumoniae (strain ATCC 700721 / MGH 78578) protein is UvrABC system protein B.